A 495-amino-acid polypeptide reads, in one-letter code: Cobyric acid synthase (495 aa).

Residues 253–446 (KISIAIVYFP…FHGIFDGSAF (194 aa)) form the GATase cobBQ-type domain. The active-site Nucleophile is Cys-334. Residue His-438 is part of the active site.

It belongs to the CobB/CobQ family. CobQ subfamily.

The protein operates within cofactor biosynthesis; adenosylcobalamin biosynthesis. In terms of biological role, catalyzes amidations at positions B, D, E, and G on adenosylcobyrinic A,C-diamide. NH(2) groups are provided by glutamine, and one molecule of ATP is hydrogenolyzed for each amidation. This is Cobyric acid synthase from Chlorobium phaeobacteroides (strain BS1).